The following is a 329-amino-acid chain: Beta-ketoacyl-[acyl-carrier-protein] synthase III (329 aa).

Catalysis depends on residues Cys-123 and His-256. The tract at residues 257-261 is ACP-binding; the sequence is QANIR. Asn-286 is a catalytic residue.

The protein belongs to the thiolase-like superfamily. FabH family. As to quaternary structure, homodimer.

Its subcellular location is the cytoplasm. It carries out the reaction malonyl-[ACP] + acetyl-CoA + H(+) = 3-oxobutanoyl-[ACP] + CO2 + CoA. Its pathway is lipid metabolism; fatty acid biosynthesis. In terms of biological role, catalyzes the condensation reaction of fatty acid synthesis by the addition to an acyl acceptor of two carbons from malonyl-ACP. Catalyzes the first condensation reaction which initiates fatty acid synthesis and may therefore play a role in governing the total rate of fatty acid production. Possesses both acetoacetyl-ACP synthase and acetyl transacylase activities. Its substrate specificity determines the biosynthesis of branched-chain and/or straight-chain of fatty acids. This Burkholderia cenocepacia (strain HI2424) protein is Beta-ketoacyl-[acyl-carrier-protein] synthase III.